A 1259-amino-acid chain; its full sequence is Telomerase reverse transcriptase (1259 aa).

A Reverse transcriptase domain is found at R742 to I1067. Mg(2+) contacts are provided by D837, D999, and D1000.

Belongs to the reverse transcriptase family. Telomerase subfamily. As to quaternary structure, component of the telomerase ribonucleoprotein complex. Expressed in shoot apices and immature embryos.

Its subcellular location is the nucleus. It is found in the chromosome. The protein localises to the telomere. It carries out the reaction DNA(n) + a 2'-deoxyribonucleoside 5'-triphosphate = DNA(n+1) + diphosphate. In terms of biological role, telomerase is a ribonucleoprotein enzyme essential for the replication of chromosome termini in most eukaryotes. It elongates telomeres. It is a reverse transcriptase that adds simple sequence repeats to chromosome ends by copying a template sequence within the RNA component of the enzyme. This is Telomerase reverse transcriptase (TERT) from Oryza sativa subsp. japonica (Rice).